Reading from the N-terminus, the 295-residue chain is 4-hydroxybenzoate octaprenyltransferase (295 aa).

Transmembrane regions (helical) follow at residues 28–48 (PIGIYLLLWPTLWAVWIAADG), 55–75 (VLIFTCGVILMRSAGCVINDF), 103–123 (WALFAVLVALSFGLVLLTDPF), 147–167 (LPQLVLGAAYSWGIPMAFTAA), 175–195 (AWLIFAANLAWTVAYDTYYAM), 219–239 (AIILALQGLTLGLLLVVGMRL), 241–261 (LGPYFHLGLLVAALCFAWEFV), and 275–295 (FLHNHWAGLAILVGLILDYGI).

It belongs to the UbiA prenyltransferase family. It depends on Mg(2+) as a cofactor.

The protein localises to the cell inner membrane. The enzyme catalyses all-trans-octaprenyl diphosphate + 4-hydroxybenzoate = 4-hydroxy-3-(all-trans-octaprenyl)benzoate + diphosphate. The protein operates within cofactor biosynthesis; ubiquinone biosynthesis. Its function is as follows. Catalyzes the prenylation of para-hydroxybenzoate (PHB) with an all-trans polyprenyl group. Mediates the second step in the final reaction sequence of ubiquinone-8 (UQ-8) biosynthesis, which is the condensation of the polyisoprenoid side chain with PHB, generating the first membrane-bound Q intermediate 3-octaprenyl-4-hydroxybenzoate. The protein is 4-hydroxybenzoate octaprenyltransferase of Azotobacter vinelandii (strain DJ / ATCC BAA-1303).